We begin with the raw amino-acid sequence, 232 residues long: MDVPADSHIKYEDAIDYWTDVDATVDGVLGGYGEGTVVPTMDVLGSNNFLRKLKSRMLPQENNVKYAVDIGAGIGRVSKTMLHKHAAKIDLVEPVKPFIEQMHVELAELKDKGQIGQIYEVGMQDWTPDAGKYWLIWCQWCVGHLPDAELVAFLKRCIVGLQPNGTIVVKENNTPTDTDDFDETDSSVTRSDAKFRQIFEEAGLKLIASERQRGLPRELYPVRMYALKPMPN.

Residues Gly-71, Arg-76, 123–124 (MQ), and Gln-139 each bind S-adenosyl-L-methionine.

It belongs to the methyltransferase superfamily. NTM1 family.

Its subcellular location is the cytoplasm. It catalyses the reaction N-terminal L-alanyl-L-prolyl-L-lysyl-[protein] + 3 S-adenosyl-L-methionine = N-terminal N,N,N-trimethyl-L-alanyl-L-prolyl-L-lysyl-[protein] + 3 S-adenosyl-L-homocysteine + 3 H(+). It carries out the reaction N-terminal L-seryl-L-prolyl-L-lysyl-[protein] + 3 S-adenosyl-L-methionine = N-terminal N,N,N-trimethyl-L-seryl-L-prolyl-L-lysyl-[protein] + 3 S-adenosyl-L-homocysteine + 3 H(+). The enzyme catalyses N-terminal L-prolyl-L-prolyl-L-lysyl-[protein] + 2 S-adenosyl-L-methionine = N-terminal N,N-dimethyl-L-prolyl-L-prolyl-L-lysyl-[protein] + 2 S-adenosyl-L-homocysteine + 2 H(+). Functionally, alpha-N-methyltransferase that methylates the N-terminus of target proteins containing the N-terminal motif [Ala/Pro/Ser]-Pro-Lys when the initiator Met is cleaved. Specifically catalyzes mono-, di- or tri-methylation of exposed alpha-amino group of Ala or Ser residue in the [Ala/Ser]-Pro-Lys motif and mono- or di-methylation of Pro in the Pro-Pro-Lys motif. Responsible for the N-terminal methylation of the ribosomal proteins RPL12A, RPL12B, RPS25A and RPS25B. In Saccharomyces cerevisiae (strain ATCC 204508 / S288c) (Baker's yeast), this protein is Alpha N-terminal protein methyltransferase 1 (TAE1).